The primary structure comprises 309 residues: Taste receptor type 2 member 8 (309 aa).

Over Met1–Asn7 the chain is Extracellular. A helical membrane pass occupies residues Ile8 to Ala28. At Leu29–Asn50 the chain is on the cytoplasmic side. A helical membrane pass occupies residues Leu51–Leu71. Residues Asn72–Gln82 are Extracellular-facing. Residues Ile83 to Leu103 form a helical membrane-spanning segment. Topologically, residues Asn104–His131 are cytoplasmic. A helical membrane pass occupies residues Trp132–Leu152. Topologically, residues Ser153 to Thr184 are extracellular. N-linked (GlcNAc...) asparagine glycosylation is present at Asn167. A helical membrane pass occupies residues Leu185–Val205. At Arg206 to Ser239 the chain is on the cytoplasmic side. The chain crosses the membrane as a helical span at residues Phe240–Met260. At Thr261–Ala266 the chain is on the extracellular side. A helical transmembrane segment spans residues Val267–Val287. The Cytoplasmic segment spans residues Leu288 to Ile309.

It belongs to the G-protein coupled receptor T2R family.

It localises to the membrane. In terms of biological role, receptor that may play a role in the perception of bitterness and is gustducin-linked. May play a role in sensing the chemical composition of the gastrointestinal content. The activity of this receptor may stimulate alpha gustducin, mediate PLC-beta-2 activation and lead to the gating of TRPM5. This is Taste receptor type 2 member 8 (TAS2R8) from Pan paniscus (Pygmy chimpanzee).